Reading from the N-terminus, the 394-residue chain is Anthocyanidin 3-O-glucosyltransferase 6 (394 aa).

Residue aspartate 37 is the Charge relay of the active site. 8 residues coordinate UDP-alpha-D-glucose: threonine 59, alanine 267, glutamine 269, histidine 284, tryptophan 287, asparagine 288, serine 289, and glutamate 292. Alanine 307 serves as a coordination point for an anthocyanidin. 2 residues coordinate UDP-alpha-D-glucose: glutamate 308 and glutamine 309.

Belongs to the UDP-glycosyltransferase family. Expressed in cotyledons and leaves.

It carries out the reaction an anthocyanidin + UDP-alpha-D-glucose + H(+) = an anthocyanidin 3-O-beta-D-glucoside + UDP. It functions in the pathway pigment biosynthesis; anthocyanin biosynthesis. Its function is as follows. In the presence of other necessary color factors, this glycosylation reaction allows the accumulation of anthocyanin pigments. May be involved in glycosylation of unstable cyanohydrins to produce stable cyanoglucosides. In Manihot esculenta (Cassava), this protein is Anthocyanidin 3-O-glucosyltransferase 6 (GT6).